Reading from the N-terminus, the 332-residue chain is Nicotianamine synthase 1 (332 aa).

The protein belongs to the nicotianamine synthase (NAS)-like family. As to expression, expressed in roots.

The catalysed reaction is 3 S-adenosyl-L-methionine = nicotianamine + 3 S-methyl-5'-thioadenosine + 3 H(+). Its function is as follows. Synthesizes nicotianamine, a polyamine that is the first intermediate in the synthesis of the phytosiderophores of the mugineic acid type found in gramineae which serve as a sensor for the physiological iron status within the plant, and/or might be involved in the transport of iron. The polypeptide is Nicotianamine synthase 1 (NAS1) (Oryza sativa subsp. indica (Rice)).